A 224-amino-acid chain; its full sequence is Propanediol dehydratase medium subunit (224 aa).

Positions 1-18 (MEINEKLLRQIIEDVLRD) are targets protein to the BMC.

It belongs to the diol/glycerol dehydratase medium subunit family. In terms of assembly, the propanediol dehydratase enzyme is a heterotrimeric complex composed of a large (PduC), a medium (PduD) and a small (PduE) subunit. Requires adenosylcob(III)alamin as cofactor.

It localises to the bacterial microcompartment. The enzyme catalyses propane-1,2-diol = propanal + H2O. Its pathway is polyol metabolism; 1,2-propanediol degradation. With respect to regulation, inhibited by glycerol. Part of the PduCDE complex that catalyzes the dehydration of 1,2-propanediol (1,2-PD) to propionaldehyde. Required for S.typhimurium growth on 1,2-PD as the sole carbon and energy source. This subunit is directly targeted to the bacterial microcompartment (BMC) dedicated to 1,2-PD degradation, and is also responsible for targeting the other 2 subunits (pduC and pduE). In terms of biological role, the 1,2-PD-specific bacterial microcompartment (BMC) concentrates low levels of 1,2-PD catabolic enzymes, concentrates volatile reaction intermediates thus enhancing pathway flux and keeps the level of toxic, mutagenic propionaldehyde low. This Salmonella typhimurium (strain LT2 / SGSC1412 / ATCC 700720) protein is Propanediol dehydratase medium subunit.